A 334-amino-acid polypeptide reads, in one-letter code: Myo-inositol 2-dehydrogenase (334 aa).

This sequence belongs to the Gfo/Idh/MocA family.

It carries out the reaction myo-inositol + NAD(+) = scyllo-inosose + NADH + H(+). It functions in the pathway polyol metabolism; myo-inositol metabolism. Its function is as follows. Catalyzes the NAD(+)-dependent oxidation of myo-inositol (MI) to 2-keto-myo-inositol (scyllo-inosose), and thus probably functions in a myo-inositol degradation pathway together with IolM, IolN and IolO. Has no activity with scyllo-inositol and much reduced activity (78-fold lower catalytic efficiency) with 1D-chiro-inositol. This is Myo-inositol 2-dehydrogenase from Thermotoga maritima (strain ATCC 43589 / DSM 3109 / JCM 10099 / NBRC 100826 / MSB8).